The chain runs to 488 residues: GTPase Der (488 aa).

Positions 3–166 (PVVALVGRPN…YALAPYAEAL (164 aa)) constitute an EngA-type G 1 domain. GTP-binding positions include 9–16 (GRPNVGKS), 56–60 (DTGGI), and 118–121 (NKVD). Residues 168-192 (LNRDGDDEEEKEEREYTEEEAEAEQ) are disordered. The span at 172–190 (GDDEEEKEEREYTEEEAEA) shows a compositional bias: acidic residues. The EngA-type G 2 domain maps to 200 to 373 (IKLAVIGKPN…SVQEAYESAT (174 aa)). Residues 206–213 (GKPNVGKS), 253–257 (DTAGV), and 318–321 (NKWD) contribute to the GTP site. The 85-residue stretch at 374-458 (RRVSTSMLTR…PIQVRFQDGD (85 aa)) folds into the KH-like domain.

It belongs to the TRAFAC class TrmE-Era-EngA-EngB-Septin-like GTPase superfamily. EngA (Der) GTPase family. Associates with the 50S ribosomal subunit.

Its function is as follows. GTPase that plays an essential role in the late steps of ribosome biogenesis. In Shewanella woodyi (strain ATCC 51908 / MS32), this protein is GTPase Der.